Consider the following 120-residue polypeptide: Cytochrome c6 (120 aa).

The N-terminal stretch at 1-35 is a signal peptide; it reads MFKLFNQASRIFFGIALPCLIFLGGIFSLGNTALA. Heme c is bound by residues cysteine 49, cysteine 52, histidine 53, and methionine 93.

Belongs to the cytochrome c family. PetJ subfamily. Monomer. Post-translationally, binds 1 heme c group covalently per subunit.

The protein resides in the cellular thylakoid lumen. Functions as an electron carrier between membrane-bound cytochrome b6-f and photosystem I in oxygenic photosynthesis. This is Cytochrome c6 (petJ) from Synechocystis sp. (strain ATCC 27184 / PCC 6803 / Kazusa).